We begin with the raw amino-acid sequence, 62 residues long: Potassium channel toxin alpha-KTx 10.1 (62 aa).

Residues 1 to 22 (MEGIAKITLILLFLFVTMHTFA) form the signal peptide. A propeptide spanning residues 23 to 28 (NWNTEA) is cleaved from the precursor. 3 disulfides stabilise this stretch: Cys31/Cys50, Cys36/Cys55, and Cys40/Cys57. Tyr60 is modified (tyrosine amide).

It belongs to the short scorpion toxin superfamily. Potassium channel inhibitor family. Alpha-KTx 10 subfamily. In terms of tissue distribution, expressed by the venom gland.

The protein localises to the secreted. Functionally, blocks Shaker B (Sh) and voltage-gated potassium-channels Kv1.1/KCNA1, Kv1.2/KCNA2, Kv1.3/KCNA3. Also inhibits small conductance calcium-activated potassium channels (KCNN) and intermediate conductance calcium-activated potassium channel (KCa3.1/KCNN4). In Centruroides noxius (Mexican scorpion), this protein is Potassium channel toxin alpha-KTx 10.1.